We begin with the raw amino-acid sequence, 203 residues long: Pyridoxine/pyridoxamine 5'-phosphate oxidase (203 aa).

FMN is bound by residues 50–55 (RMVLLK), 65–66 (YT), Lys72, and Gln94. Position 55 (Lys55) interacts with substrate. Tyr112, Arg116, and Ser120 together coordinate substrate. Residues 129–130 (QS) and Trp174 each bind FMN. Residue 180–182 (RLH) coordinates substrate. Arg184 is a binding site for FMN.

This sequence belongs to the pyridoxamine 5'-phosphate oxidase family. As to quaternary structure, homodimer. The cofactor is FMN.

The catalysed reaction is pyridoxamine 5'-phosphate + O2 + H2O = pyridoxal 5'-phosphate + H2O2 + NH4(+). It carries out the reaction pyridoxine 5'-phosphate + O2 = pyridoxal 5'-phosphate + H2O2. The protein operates within cofactor metabolism; pyridoxal 5'-phosphate salvage; pyridoxal 5'-phosphate from pyridoxamine 5'-phosphate: step 1/1. Its pathway is cofactor metabolism; pyridoxal 5'-phosphate salvage; pyridoxal 5'-phosphate from pyridoxine 5'-phosphate: step 1/1. Its function is as follows. Catalyzes the oxidation of either pyridoxine 5'-phosphate (PNP) or pyridoxamine 5'-phosphate (PMP) into pyridoxal 5'-phosphate (PLP). In Brucella anthropi (strain ATCC 49188 / DSM 6882 / CCUG 24695 / JCM 21032 / LMG 3331 / NBRC 15819 / NCTC 12168 / Alc 37) (Ochrobactrum anthropi), this protein is Pyridoxine/pyridoxamine 5'-phosphate oxidase.